We begin with the raw amino-acid sequence, 854 residues long: Glucans biosynthesis glucosyltransferase H (854 aa).

7 helical membrane-spanning segments follow: residues 155–175, 209–229, 528–548, 583–603, 619–639, 671–691, and 695–715; these read ILLV…KTIL, ILVL…TALM, VFLT…FLML, IALF…SVIL, FISL…RMLF, FVRH…MAWL, and FLWW…VSVY.

The protein belongs to the glycosyltransferase 2 family. OpgH subfamily.

The protein localises to the cell inner membrane. Its pathway is glycan metabolism; osmoregulated periplasmic glucan (OPG) biosynthesis. Involved in the biosynthesis of osmoregulated periplasmic glucans (OPGs). The chain is Glucans biosynthesis glucosyltransferase H from Pectobacterium carotovorum subsp. carotovorum (strain PC1).